We begin with the raw amino-acid sequence, 548 residues long: MKALERVYVIGHKNPDTDSVCSAIGYAHFKNNVEKGKTFIPARSGDLTNESLFVLKYFGMNPPLHIETLEPTVEDLELKNPIFVTPDTSAYDVAMLMESRGIKNVPVVSKEKMIGVVTESNIARVYVRRLKIEPLVIHPVPFDQLVRILKAEVVCDYMKEKTVSGKVHIAVDALHVLLGKIEIGDVVIVGDNEPAQIALLEKGAKLMIVVNNAPVSNRVLEIAKEKNAAVLRVKFDAFSAAKLINLSLPVTLVMSKKFPTVTKKDTLEEVKEIVFTSKIRAAFVEDEKGRLCGVITRTDLLKDVRKKVILVDHNEITQAPEGVEKAEILEIIDHHRLGGLSTLNPVFFYNEPVGSTSTIVAEFFLKNGVKMEREIAGILLSGIVSDTLFFKLSTTTEKDRKMANFLADVAKLDLEKFAKKLLKEGMKIPEDVDPAELLKRDVKVYEMGEESFAVSQIMTSDFSTLLKEKERFMNTLKTLKGEFGVKHFFVLFTNPVEEASLLMMDGDQKLVEKAFNAEKKDGLFLLKGVMSRKKDFVPKIGEVLRRER.

The segment at 1 to 74 (MKALERVYVI…HIETLEPTVE (74 aa)) is PPase part 1. 3 residues coordinate Mn(2+): His12, Asp16, and Asp18. CBS domains lie at 77-132 (ELKN…RLKI) and 254-311 (MSKK…VILV). Residues 306–548 (KKVILVDHNE…KIGEVLRRER (243 aa)) are PPase part 2. 3 residues coordinate Mn(2+): Asp312, His334, and Asp386.

The protein belongs to the PPase class C family. Requires Mn(2+) as cofactor.

Its subcellular location is the cytoplasm. It catalyses the reaction diphosphate + H2O = 2 phosphate + H(+). The polypeptide is Probable manganese-dependent inorganic pyrophosphatase (ppaC) (Thermotoga maritima (strain ATCC 43589 / DSM 3109 / JCM 10099 / NBRC 100826 / MSB8)).